The primary structure comprises 230 residues: Urease accessory protein UreF (230 aa).

This sequence belongs to the UreF family. In terms of assembly, ureD, UreF and UreG form a complex that acts as a GTP-hydrolysis-dependent molecular chaperone, activating the urease apoprotein by helping to assemble the nickel containing metallocenter of UreC. The UreE protein probably delivers the nickel.

The protein localises to the cytoplasm. In terms of biological role, required for maturation of urease via the functional incorporation of the urease nickel metallocenter. This Marinomonas sp. (strain MWYL1) protein is Urease accessory protein UreF.